The following is a 121-amino-acid chain: Basic phospholipase A2 BmTX-I (121 aa).

7 cysteine pairs are disulfide-bonded: Cys26–Cys114, Cys28–Cys45, Cys44–Cys95, Cys50–Cys121, Cys51–Cys88, Cys58–Cys82, and Cys76–Cys86. Ca(2+)-binding residues include Tyr27, Gly29, and Gly31. His48 is a catalytic residue. Asp49 is a Ca(2+) binding site. The active site involves Asp89.

It depends on Ca(2+) as a cofactor. In terms of tissue distribution, expressed by the venom gland.

It localises to the secreted. It catalyses the reaction a 1,2-diacyl-sn-glycero-3-phosphocholine + H2O = a 1-acyl-sn-glycero-3-phosphocholine + a fatty acid + H(+). With respect to regulation, inhibited by magnesium, cadmium and manganese ions. Also inhibited by crotapotin. Snake venom phospholipase A2 (PLA2) that shows enzymatic activity in the presence of a synthetic substrate. In vitro, blocks the neuromuscular transmission in young chick biventer cervicis preparations. In mice, induces myonecrosis and a systemic interleukin-6 response upon intramuscular injection. Also induces edema and exerts a strong pro-inflammatory effect. PLA2 catalyzes the calcium-dependent hydrolysis of the 2-acyl groups in 3-sn-phosphoglycerides. This is Basic phospholipase A2 BmTX-I from Bothrops moojeni (Lance-headed viper).